We begin with the raw amino-acid sequence, 132 residues long: Small ribosomal subunit protein uS8 (132 aa).

The protein belongs to the universal ribosomal protein uS8 family. As to quaternary structure, part of the 30S ribosomal subunit. Contacts proteins S5 and S12.

Functionally, one of the primary rRNA binding proteins, it binds directly to 16S rRNA central domain where it helps coordinate assembly of the platform of the 30S subunit. This chain is Small ribosomal subunit protein uS8, found in Anaeromyxobacter sp. (strain Fw109-5).